A 733-amino-acid chain; its full sequence is Ribosomal protein S6 kinase alpha-2 (733 aa).

The Protein kinase 1 domain occupies Phe59–Phe318. Residues Leu65–Val73 and Lys91 contribute to the ATP site. Catalysis depends on Asp184, which acts as the Proton acceptor. Ser218 carries the phosphoserine; by PDPK1 modification. One can recognise an AGC-kinase C-terminal domain in the interval Val319–Ser388. Residue Ser377 is modified to Phosphoserine. The 258-residue stretch at Tyr415 to Ile672 folds into the Protein kinase 2 domain. ATP contacts are provided by residues Ile421–Cys429 and Lys444. The active-site Proton acceptor is the Asp532.

Belongs to the protein kinase superfamily. AGC Ser/Thr protein kinase family. S6 kinase subfamily. In terms of assembly, forms a complex with either MAPK1/ERK2 or MAPK3/ERK1 in quiescent cells. Transiently dissociates following mitogenic stimulation. Interacts with FBXO5; cooperate to induce the metaphase arrest of early blastomeres; increases and stabilizes interaction of FBXO5 with CDC20. Requires Mg(2+) as cofactor. Activated by phosphorylation at Ser-218 by PDPK1. Autophosphorylated on Ser-377, as part of the activation process. May be phosphorylated at Thr-356 and Ser-360 by MAPK1/ERK2 and MAPK3/ERK1. In terms of processing, N-terminal myristoylation results in an activated kinase in the absence of added growth factors.

It localises to the nucleus. Its subcellular location is the cytoplasm. It catalyses the reaction L-seryl-[protein] + ATP = O-phospho-L-seryl-[protein] + ADP + H(+). It carries out the reaction L-threonyl-[protein] + ATP = O-phospho-L-threonyl-[protein] + ADP + H(+). Its activity is regulated as follows. Upon extracellular signal or mitogen stimulation, phosphorylated at Thr-570 in the C-terminal kinase domain (CTKD) by MAPK1/ERK2 and MAPK3/ERK1. The activated CTKD then autophosphorylates Ser-377, allowing binding of PDPK1, which in turn phosphorylates Ser-218 in the N-terminal kinase domain (NTDK) leading to the full activation of the protein and subsequent phosphorylation of the substrates by the NTKD. In terms of biological role, serine/threonine-protein kinase that acts downstream of ERK (MAPK1/ERK2 and MAPK3/ERK1) signaling and mediates mitogenic and stress-induced activation of transcription factors, regulates translation, and mediates cellular proliferation, survival, and differentiation. May function as tumor suppressor in epithelial ovarian cancer cells. In Mus musculus (Mouse), this protein is Ribosomal protein S6 kinase alpha-2 (Rps6ka2).